A 535-amino-acid chain; its full sequence is CTP synthase (535 aa).

Residues 1 to 268 (MKTKYIFVTG…DSLVCKKLEL (268 aa)) are amidoligase domain. CTP is bound at residue Ser14. Ser14 contributes to the UTP binding site. 15–20 (SLGKGI) provides a ligand contact to ATP. Residue Tyr55 coordinates L-glutamine. Asp72 is an ATP binding site. Residues Asp72 and Glu142 each contribute to the Mg(2+) site. Residues 149–151 (DIE), 189–194 (KTKPTQ), and Lys225 contribute to the CTP site. UTP contacts are provided by residues 189 to 194 (KTKPTQ) and Lys225. The Glutamine amidotransferase type-1 domain maps to 293–535 (TIGLVGKYVE…IKVACTVKEK (243 aa)). Residue Gly355 participates in L-glutamine binding. Residue Cys382 is the Nucleophile; for glutamine hydrolysis of the active site. Residues 383 to 386 (LGMQ), Glu406, and Arg463 contribute to the L-glutamine site. Catalysis depends on residues His508 and Glu510.

It belongs to the CTP synthase family. As to quaternary structure, homotetramer.

It carries out the reaction UTP + L-glutamine + ATP + H2O = CTP + L-glutamate + ADP + phosphate + 2 H(+). The enzyme catalyses L-glutamine + H2O = L-glutamate + NH4(+). The catalysed reaction is UTP + NH4(+) + ATP = CTP + ADP + phosphate + 2 H(+). The protein operates within pyrimidine metabolism; CTP biosynthesis via de novo pathway; CTP from UDP: step 2/2. Its activity is regulated as follows. Allosterically activated by GTP, when glutamine is the substrate; GTP has no effect on the reaction when ammonia is the substrate. The allosteric effector GTP functions by stabilizing the protein conformation that binds the tetrahedral intermediate(s) formed during glutamine hydrolysis. Inhibited by the product CTP, via allosteric rather than competitive inhibition. Catalyzes the ATP-dependent amination of UTP to CTP with either L-glutamine or ammonia as the source of nitrogen. Regulates intracellular CTP levels through interactions with the four ribonucleotide triphosphates. This is CTP synthase from Clostridium acetobutylicum (strain ATCC 824 / DSM 792 / JCM 1419 / IAM 19013 / LMG 5710 / NBRC 13948 / NRRL B-527 / VKM B-1787 / 2291 / W).